The following is a 297-amino-acid chain: MKHFLEISQLSSEQIESLLQRALYFKHTKQYPSYSQSIIANLFYENSTRTRISFELAERHLAMSVVNLDLQTSSEIKGEAIEDTIRTLAAMGIQYFVIRHKQDGLQQNLANKLGDTVHIINAGDGTHAHPSQAILDMVTIIEQKKRLDKLKIAILGNIKHSRVANSFQCICSKLGVGDLVLISPEIWQPSQVHFGRVTDNLNEGLEGADVVICLRVQRERLLEDDHLDLDFYRNNFALTQKSLSYAKPDAMVMHPGPMNRGVEIDSEVADGNQSCILQQVTNGVYARMAILESLIAS.

Carbamoyl phosphate-binding residues include Arg49 and Thr50. Lys77 is a binding site for L-aspartate. Residues Arg99, His129, and Gln132 each contribute to the carbamoyl phosphate site. Residues Arg162 and Arg215 each contribute to the L-aspartate site. The carbamoyl phosphate site is built by Gly256 and Pro257.

Belongs to the aspartate/ornithine carbamoyltransferase superfamily. ATCase family. As to quaternary structure, heterododecamer (2C3:3R2) of six catalytic PyrB chains organized as two trimers (C3), and six regulatory PyrI chains organized as three dimers (R2).

It catalyses the reaction carbamoyl phosphate + L-aspartate = N-carbamoyl-L-aspartate + phosphate + H(+). It participates in pyrimidine metabolism; UMP biosynthesis via de novo pathway; (S)-dihydroorotate from bicarbonate: step 2/3. In terms of biological role, catalyzes the condensation of carbamoyl phosphate and aspartate to form carbamoyl aspartate and inorganic phosphate, the committed step in the de novo pyrimidine nucleotide biosynthesis pathway. The polypeptide is Aspartate carbamoyltransferase catalytic subunit (Legionella pneumophila (strain Paris)).